The following is a 484-amino-acid chain: Aspartyl aminopeptidase (484 aa).

Position 1 is an N-acetylmethionine (M1). H84 provides a ligand contact to Zn(2+). H159 contributes to the substrate binding site. The span at 188-206 (PVESKSTTTTTTTESPKTS) shows a compositional bias: low complexity. A disordered region spans residues 188–213 (PVESKSTTTTTTTESPKTSDPQDVNS). D266 contacts Zn(2+). Position 301 (E301) interacts with substrate. 2 residues coordinate Zn(2+): E302 and D354. Residues D354, H357, K382, and Y389 each contribute to the substrate site. Position 448 (H448) interacts with Zn(2+).

The protein belongs to the peptidase M18 family. Tetrahedron-shaped homododecamer built from six homodimers. The cofactor is Zn(2+).

It is found in the cytoplasm. It carries out the reaction Release of an N-terminal aspartate or glutamate from a peptide, with a preference for aspartate.. Likely to play an important role in intracellular protein and peptide metabolism. This Dictyostelium discoideum (Social amoeba) protein is Aspartyl aminopeptidase (dnpep).